The primary structure comprises 255 residues: Gene 54 protein (255 aa).

This Mycobacterium phage D29 (Mycobacteriophage D29) protein is Gene 54 protein (54).